The sequence spans 80 residues: Putative ankyrin repeat protein RC0877 (80 aa).

The stretch at 6-46 is one ANK repeat; it reads SGGIPLHAVAKNVRCTSKDIKDYEIYKLLVSYGADINARVE.

The sequence is that of Putative ankyrin repeat protein RC0877 from Rickettsia conorii (strain ATCC VR-613 / Malish 7).